A 423-amino-acid chain; its full sequence is MTTHPLTMPIPEYFEEILESVRSDVSGEVAQYIPQLKDADPNPLALAMCTVDGHIYGAGDDEHEFTMQSVSKPFAYALALQEQGPEKVFATVGLEPSGEAFNELSLDGSTNRPMNPMINAGAIAVNQLINGSESSVEDRVEKIRSYFSALAGRELNIDRQLSETEIEGADRNLSIAHMLRNYGIIEDDAHDAVLSYTLQCSVKVTARDLAVMTATLAAGGTQPLTGEKLVDARVARLVLSTMASAGMYDEAGQWLATVGIPAKSGVSGGLVGVLPGQLGLATFSPRLNSQGNPVRGVEIFKALSEDMGLHLMSAELLTQHAVRAIEERGDTTVIQLQGAMNFSAAENFLFTVTDHDFTGEKVVLDISRVPMFRPMGRRLVKEGLRRIRDNGFKVAIYDPEDILPDFDFSDGTKSPQVDDPEEL.

The segment at 27 to 312 is glutaminase; the sequence is GEVAQYIPQL…LSEDMGLHLM (286 aa). Substrate-binding residues include S69, N119, E165, N172, Y196, Y248, and V266. One can recognise an STAS domain in the interval 321 to 423; it reads AVRAIEERGD…SPQVDDPEEL (103 aa).

This sequence belongs to the glutaminase family. Homotetramer.

The enzyme catalyses L-glutamine + H2O = L-glutamate + NH4(+). This chain is Glutaminase (glsA), found in Corynebacterium efficiens (strain DSM 44549 / YS-314 / AJ 12310 / JCM 11189 / NBRC 100395).